The chain runs to 187 residues: MDIIEKRITKRHLSESELSGVNYYNCIFERIQLDNFNFRDCEFEKCRFVNCSIKNLKLNFFKLIDCEFKDCLLQGVNAADIMFPCTFSLVNCDLRFVDFISLRLQKSIFLSCRFRDCLFEETDLRKSDFTGSEFNNTEFRHSDLSHCDFSMTEGLDINPEINRILSIKIPQEAGLKILKRMGVVVGG.

This sequence belongs to the pentapeptide repeat protein family.

Functionally, together with proteins McbE and McbF this protein causes immunity to the peptide antibiotic microcin B17 (MccB17), which inhibits DNA replication in Enterobacteriaceae by induction of the SOS repair system. McbG alone can provide some protection. This is Protein McbG (mcbG) from Escherichia coli.